Here is a 210-residue protein sequence, read N- to C-terminus: Thymidylate kinase (210 aa).

Gly-9–Ser-16 serves as a coordination point for ATP.

It belongs to the thymidylate kinase family.

It carries out the reaction dTMP + ATP = dTDP + ADP. Phosphorylation of dTMP to form dTDP in both de novo and salvage pathways of dTTP synthesis. The chain is Thymidylate kinase from Aliivibrio fischeri (strain MJ11) (Vibrio fischeri).